The primary structure comprises 234 residues: tRNA (guanine-N(1)-)-methyltransferase (234 aa).

S-adenosyl-L-methionine contacts are provided by residues Gly112 and 132 to 137 (IGDFIL).

The protein belongs to the RNA methyltransferase TrmD family. As to quaternary structure, homodimer.

It localises to the cytoplasm. The enzyme catalyses guanosine(37) in tRNA + S-adenosyl-L-methionine = N(1)-methylguanosine(37) in tRNA + S-adenosyl-L-homocysteine + H(+). Specifically methylates guanosine-37 in various tRNAs. This Campylobacter jejuni subsp. doylei (strain ATCC BAA-1458 / RM4099 / 269.97) protein is tRNA (guanine-N(1)-)-methyltransferase.